We begin with the raw amino-acid sequence, 238 residues long: MGKRLRQQRAGRGTPTYRSRAHIHPGPAKYPPLSGDTLRGKVVELIHDPGRYVPLARVVREDGVEFLMPAAEGMYVGQIIEIGPAAKPEAGNILPLGKIPEGTEVFNVELRPGDGGKLARQAGSYALVVGRAGAKTILRLPSGKDKEVPNDSRATIGIPAGAGRIEKPIMKAGFAYHKWKVKARKWPRVRGVAMNAVDHPFGGGRHQHKGRPSTVARTAPPGRKVGHIAARRTGRRKR.

Disordered stretches follow at residues 1 to 34 and 197 to 238; these read MGKR…PPLS and VDHP…RRKR. The segment covering 224-238 has biased composition (basic residues); sequence KVGHIAARRTGRRKR.

Belongs to the universal ribosomal protein uL2 family. As to quaternary structure, part of the 50S ribosomal subunit. Forms a bridge to the 30S subunit in the 70S ribosome.

Functionally, one of the primary rRNA binding proteins. Required for association of the 30S and 50S subunits to form the 70S ribosome, for tRNA binding and peptide bond formation. It has been suggested to have peptidyltransferase activity; this is somewhat controversial. Makes several contacts with the 16S rRNA in the 70S ribosome. This is Large ribosomal subunit protein uL2 from Aeropyrum pernix (strain ATCC 700893 / DSM 11879 / JCM 9820 / NBRC 100138 / K1).